The sequence spans 159 residues: MTNGNGTPPEGAPSPQLNVLAQYTKDLSFENPNAPSSLAPQQKPPSISVQINVNANNVAQDEFEVTLTVEGKAEHNDKLMFRFELAYAGLFRIVNVPQENLPPLVMIECPRLLFPFAREIIATAVRDGGFPPLMLDPVDFVGMFRQNMERQAAVQQKPS.

The protein belongs to the SecB family. In terms of assembly, homotetramer, a dimer of dimers. One homotetramer interacts with 1 SecA dimer.

Its subcellular location is the cytoplasm. One of the proteins required for the normal export of preproteins out of the cell cytoplasm. It is a molecular chaperone that binds to a subset of precursor proteins, maintaining them in a translocation-competent state. It also specifically binds to its receptor SecA. The polypeptide is Protein-export protein SecB (Nitrobacter hamburgensis (strain DSM 10229 / NCIMB 13809 / X14)).